The primary structure comprises 380 residues: Kappa-type opioid receptor (380 aa).

The Extracellular segment spans residues 1–57; the sequence is MESPIQIFRGEPGPTCAPSACLLPNSSSWFPNWAESDSNGSVGSEDQQLEPAHISPA. N-linked (GlcNAc...) asparagine glycosylation is found at asparagine 25 and asparagine 39. Residues 58–85 traverse the membrane as a helical segment; it reads IPVIITAVYSVVFVVGLVGNSLVMFVII. Over 86-95 the chain is Cytoplasmic; sequence RYTKMKTATN. The helical transmembrane segment at 96 to 119 threads the bilayer; sequence IYIFNLALADALVTTTMPFQSAVY. The Extracellular segment spans residues 120–132; that stretch reads LMNSWPFGDVLCK. A disulfide bridge connects residues cysteine 131 and cysteine 210. Residues 133-154 form a helical membrane-spanning segment; the sequence is IVISIDYYNMFTSIFTLTMMSV. The Cytoplasmic portion of the chain corresponds to 155–173; the sequence is DRYIAVCHPVKALDFRTPL. The chain crosses the membrane as a helical span at residues 174–196; it reads KAKIINICIWLLASSVGISAIVL. Residues 197–222 are Extracellular-facing; it reads GGTKVREDVDVIECSLQFPDDEYSWW. The chain crosses the membrane as a helical span at residues 223–247; it reads DLFMKICVFVFAFVIPVLIIIVCYT. Topologically, residues 248 to 274 are cytoplasmic; the sequence is LMILRLKSVRLLSGSREKDRNLRRITK. A helical transmembrane segment spans residues 275 to 296; sequence LVLVVVAVFIICWTPIHIFILV. The Extracellular segment spans residues 297 to 311; that stretch reads EALGSTSHSTAVLSS. Residues 312-333 form a helical membrane-spanning segment; sequence YYFCIALGYTNSSLNPVLYAFL. Residues 334 to 380 lie on the Cytoplasmic side of the membrane; that stretch reads DENFKRCFRDFCFPIKMRMERQSTNRVRNTVQDPASMRDVGGMNKPV. Cysteine 345 carries the S-palmitoyl cysteine lipid modification.

This sequence belongs to the G-protein coupled receptor 1 family. As to quaternary structure, interacts with NHERF1. Interacts with GABARAPL1.

The protein resides in the cell membrane. G-protein coupled opioid receptor that functions as a receptor for endogenous alpha-neoendorphins and dynorphins, but has low affinity for beta-endorphins. Also functions as a receptor for various synthetic opioids and for the psychoactive diterpene salvinorin A. Ligand binding causes a conformation change that triggers signaling via guanine nucleotide-binding proteins (G proteins) and modulates the activity of down-stream effectors, such as adenylate cyclase. Signaling leads to the inhibition of adenylate cyclase activity. Inhibits neurotransmitter release by reducing calcium ion currents and increasing potassium ion conductance. Plays a role in the perception of pain. Plays a role in mediating reduced physical activity upon treatment with synthetic opioids. Plays a role in the regulation of salivation in response to synthetic opioids. May play a role in arousal and regulation of autonomic and neuroendocrine functions. The sequence is that of Kappa-type opioid receptor (Oprk1) from Rattus norvegicus (Rat).